The sequence spans 242 residues: Cytochrome c oxidase subunit 2 (242 aa).

At 7–33 (DVPVPYGLYFQDSATPTFDGIIELHDI) the chain is on the mitochondrial intermembrane side. The chain crosses the membrane as a helical span at residues 34-55 (VMFYIVVTIVLVSYLLFVIIKN). The Mitochondrial matrix portion of the chain corresponds to 56 to 73 (FSNDHISYKYLTHGTTLE). Residues 74–98 (IVWTIFPVVILLFIAFPSFILLYLC) form a helical membrane-spanning segment. Topologically, residues 99-242 (DEVIDPAMTI…DKFLSWLDEQ (144 aa)) are mitochondrial intermembrane. Cu cation contacts are provided by His177, Cys212, Glu214, Cys216, His220, and Met223. Residue Glu214 coordinates Mg(2+).

This sequence belongs to the cytochrome c oxidase subunit 2 family. Component of the cytochrome c oxidase (complex IV, CIV), a multisubunit enzyme composed of a catalytic core of 3 subunits and several supernumerary subunits. The complex exists as a monomer or a dimer and forms supercomplexes (SCs) in the inner mitochondrial membrane with ubiquinol-cytochrome c oxidoreductase (cytochrome b-c1 complex, complex III, CIII). Requires Cu cation as cofactor. The signal sequence of COX2 is processed by IMP1.

The protein localises to the mitochondrion inner membrane. The enzyme catalyses 4 Fe(II)-[cytochrome c] + O2 + 8 H(+)(in) = 4 Fe(III)-[cytochrome c] + 2 H2O + 4 H(+)(out). Its function is as follows. Component of the cytochrome c oxidase, the last enzyme in the mitochondrial electron transport chain which drives oxidative phosphorylation. The respiratory chain contains 3 multisubunit complexes succinate dehydrogenase (complex II, CII), ubiquinol-cytochrome c oxidoreductase (cytochrome b-c1 complex, complex III, CIII) and cytochrome c oxidase (complex IV, CIV), that cooperate to transfer electrons derived from NADH and succinate to molecular oxygen, creating an electrochemical gradient over the inner membrane that drives transmembrane transport and the ATP synthase. Cytochrome c oxidase is the component of the respiratory chain that catalyzes the reduction of oxygen to water. Electrons originating from reduced cytochrome c in the intermembrane space (IMS) are transferred via the dinuclear copper A center (CU(A)) of subunit 2 and heme A of subunit 1 to the active site in subunit 1, a binuclear center (BNC) formed by heme A3 and copper B (CU(B)). The BNC reduces molecular oxygen to 2 water molecules using 4 electrons from cytochrome c in the IMS and 4 protons from the mitochondrial matrix. This is Cytochrome c oxidase subunit 2 (COX2) from Yarrowia lipolytica (strain CLIB 122 / E 150) (Yeast).